We begin with the raw amino-acid sequence, 176 residues long: MTEAGAKKAAGKKSGKGKGKNAKKNQPNITPVAENRKAKFRYEILDSVECGMMLMGSEVKSMREGKLSLDEAHIRVTNGELWLVGSDIAHYNNAGMWNHDPRRPRKLLVHAKEFDKFAGRAFERGLTLIPLRVYFSERGLAKCVMGLVKGKKLHDKRETIKKRESDRGLQRAMRRK.

The disordered stretch occupies residues 1–33 (MTEAGAKKAAGKKSGKGKGKNAKKNQPNITPVA). Residues 9–23 (AAGKKSGKGKGKNAK) show a composition bias toward basic residues.

It belongs to the SmpB family.

The protein resides in the cytoplasm. In terms of biological role, required for rescue of stalled ribosomes mediated by trans-translation. Binds to transfer-messenger RNA (tmRNA), required for stable association of tmRNA with ribosomes. tmRNA and SmpB together mimic tRNA shape, replacing the anticodon stem-loop with SmpB. tmRNA is encoded by the ssrA gene; the 2 termini fold to resemble tRNA(Ala) and it encodes a 'tag peptide', a short internal open reading frame. During trans-translation Ala-aminoacylated tmRNA acts like a tRNA, entering the A-site of stalled ribosomes, displacing the stalled mRNA. The ribosome then switches to translate the ORF on the tmRNA; the nascent peptide is terminated with the 'tag peptide' encoded by the tmRNA and targeted for degradation. The ribosome is freed to recommence translation, which seems to be the essential function of trans-translation. The protein is SsrA-binding protein of Rhodopirellula baltica (strain DSM 10527 / NCIMB 13988 / SH1).